Consider the following 122-residue polypeptide: Large ribosomal subunit protein uL14 (122 aa).

The protein belongs to the universal ribosomal protein uL14 family. Part of the 50S ribosomal subunit. Forms a cluster with proteins L3 and L19. In the 70S ribosome, L14 and L19 interact and together make contacts with the 16S rRNA in bridges B5 and B8.

In terms of biological role, binds to 23S rRNA. Forms part of two intersubunit bridges in the 70S ribosome. This Shewanella loihica (strain ATCC BAA-1088 / PV-4) protein is Large ribosomal subunit protein uL14.